The primary structure comprises 119 residues: Large ribosomal subunit protein uL18 (119 aa).

Belongs to the universal ribosomal protein uL18 family. As to quaternary structure, part of the 50S ribosomal subunit; part of the 5S rRNA/L5/L18/L25 subcomplex. Contacts the 5S and 23S rRNAs.

Its function is as follows. This is one of the proteins that bind and probably mediate the attachment of the 5S RNA into the large ribosomal subunit, where it forms part of the central protuberance. The protein is Large ribosomal subunit protein uL18 of Clostridium botulinum (strain ATCC 19397 / Type A).